The sequence spans 539 residues: Phosphoenolpyruvate carboxykinase (ATP) (539 aa).

Positions 64, 206, and 212 each coordinate substrate. ATP is bound by residues Lys-212, His-231, and 247-255; that span reads GLSGTGKTT. Residues Lys-212 and His-231 each contribute to the Mn(2+) site. Asp-268 contributes to the Mn(2+) binding site. Residues Glu-296, Arg-332, 448–449, and Thr-454 contribute to the ATP site; that span reads RI. Residue Arg-332 coordinates substrate.

The protein belongs to the phosphoenolpyruvate carboxykinase (ATP) family. In terms of assembly, monomer. The cofactor is Mn(2+).

It localises to the cytoplasm. The catalysed reaction is oxaloacetate + ATP = phosphoenolpyruvate + ADP + CO2. It participates in carbohydrate biosynthesis; gluconeogenesis. Its function is as follows. Involved in the gluconeogenesis. Catalyzes the conversion of oxaloacetate (OAA) to phosphoenolpyruvate (PEP) through direct phosphoryl transfer between the nucleoside triphosphate and OAA. This chain is Phosphoenolpyruvate carboxykinase (ATP), found in Pectobacterium carotovorum subsp. carotovorum (strain PC1).